We begin with the raw amino-acid sequence, 901 residues long: Serine/threonine-protein kinase-like protein CR4 (901 aa).

A signal peptide spans 1 to 22; sequence MDIVPVVALCCCLVLLPSWAYG. 7 consecutive repeat copies span residues 31–66, 70–105, 123–158, 160–193, 201–234, 251–285, and 290–328. The tract at residues 31-328 is 7 X 36 AA repeats; the sequence is VSYGEDGPVF…PLALPMAVSP (298 aa). Asn149 and Asn177 each carry an N-linked (GlcNAc...) asparagine glycan. Residue Asn280 is glycosylated (N-linked (GlcNAc...) asparagine). The TNFR-Cys repeat unit spans residues 335-389; sequence SCSHGYYEYANHGEVGSGSKTCKPANSRLCLPCSVGCPDDSYESSPCNATADRVC. 3 disulfides stabilise this stretch: Cys336–Cys364, Cys367–Cys381, and Cys371–Cys389. Asn382 is a glycosylation site (N-linked (GlcNAc...) asparagine). A helical membrane pass occupies residues 423–443; that stretch reads IFVAEIAFAVILVFSVTAIAC. A Protein kinase domain is found at 504–781; sequence FSEDSQVGKG…KVTTALERAL (278 aa). ATP-binding positions include 510–518 and Lys532; that span reads VGKGSFSCV. Asp633 serves as the catalytic Proton acceptor. The disordered stretch occupies residues 845-901; that stretch reads VTSSQRRKSSASEADMDGRTTTDGRNVGSSIGDGLRSLEEEISPASPQENLYLQHNF. Residues 889–901 are compositionally biased toward polar residues; sequence ASPQENLYLQHNF.

This sequence belongs to the protein kinase superfamily. Ser/Thr protein kinase family. Homodimer. In terms of processing, autophosphorylated. As to expression, specifically expressed in the epidermal cells of paleas and lemmas.

It is found in the cell membrane. The protein localises to the endosome. Its subcellular location is the multivesicular body membrane. The catalysed reaction is L-seryl-[protein] + ATP = O-phospho-L-seryl-[protein] + ADP + H(+). It carries out the reaction L-threonyl-[protein] + ATP = O-phospho-L-threonyl-[protein] + ADP + H(+). Receptor protein kinase. Could play a role in a differentiation signal. Controls formative cell division in meristems. Regulates epidermal cell differentiation in many organs. During floral organogenesis, required to maintain the interlocking of the palea and lemma, and fertility. Triggers culm elongation. The polypeptide is Serine/threonine-protein kinase-like protein CR4 (Oryza sativa subsp. japonica (Rice)).